The sequence spans 59 residues: Large ribosomal subunit protein uL30 (59 aa).

Belongs to the universal ribosomal protein uL30 family. In terms of assembly, part of the 50S ribosomal subunit.

The sequence is that of Large ribosomal subunit protein uL30 from Pectobacterium atrosepticum (strain SCRI 1043 / ATCC BAA-672) (Erwinia carotovora subsp. atroseptica).